Consider the following 799-residue polypeptide: Protein phosphatase 1 regulatory subunit 3F (799 aa).

Positions 1-30 (MARTAPVEPPLRHPAPPSPAAGEPRASAEA) are disordered. Residues 1-772 (MARTAPVEPP…LTQTLGVLAG (772 aa)) are Cytoplasmic-facing. The segment covering 7–19 (VEPPLRHPAPPSP) has biased composition (pro residues). Phosphoserine is present on serine 18. Over residues 20–30 (AAGEPRASAEA) the composition is skewed to low complexity. Positions 36 to 39 (RVLF) match the PP1-binding motif motif. Disordered regions lie at residues 53–108 (RYRP…PVPA), 201–235 (SPPGAGVGGTGAGDPLLDPGLGLGPGQMSASSPDD), 332–353 (RRRPFEEEPRMRSADDNTLAEH), and 417–439 (ATCGLGGPPRDQASGPDASDRAA). The span at 78–97 (ADEEDDGEDGDEGEEEEEAF) shows a compositional bias: acidic residues. In terms of domain architecture, CBM21 spans 127-283 (LERLGRVMVE…NNHGRNYTVL (157 aa)). Basic and acidic residues predominate over residues 334–353 (RPFEEEPRMRSADDNTLAEH). Residue serine 545 is modified to Phosphoserine. 3 disordered regions span residues 566-600 (KDTEDPDDEGEGEDGLSITPSSPEGGSPKESPPEI), 663-688 (SKSPGEAGTESQMEELPTERESSWVP), and 722-743 (PHVNSQEEEGGSLNLESPKRSP). The span at 569–579 (EDPDDEGEGED) shows a compositional bias: acidic residues. The segment covering 585–594 (PSSPEGGSPK) has biased composition (low complexity). Phosphoserine occurs at positions 587 and 592. The segment covering 679–688 (PTERESSWVP) has biased composition (basic and acidic residues). A helical membrane pass occupies residues 773-793 (LVMVPVALNSGVSLLVLVLCL). Over 794–799 (SLAWFS) the chain is Extracellular.

As to expression, highly expressed in brain (at protein level).

It is found in the membrane. In terms of biological role, glycogen-targeting subunit for protein phosphatase 1 (PP1). The sequence is that of Protein phosphatase 1 regulatory subunit 3F (Ppp1r3f) from Mus musculus (Mouse).